A 54-amino-acid chain; its full sequence is ATP synthase protein 8 (54 aa).

The helical transmembrane segment at 8 to 28 threads the bilayer; the sequence is WWLLNFFLGWTSLLVIFIILL.

It belongs to the ATPase protein 8 family. F-type ATPases have 2 components, CF(1) - the catalytic core - and CF(0) - the membrane proton channel.

Its subcellular location is the mitochondrion membrane. Mitochondrial membrane ATP synthase (F(1)F(0) ATP synthase or Complex V) produces ATP from ADP in the presence of a proton gradient across the membrane which is generated by electron transport complexes of the respiratory chain. F-type ATPases consist of two structural domains, F(1) - containing the extramembraneous catalytic core and F(0) - containing the membrane proton channel, linked together by a central stalk and a peripheral stalk. During catalysis, ATP synthesis in the catalytic domain of F(1) is coupled via a rotary mechanism of the central stalk subunits to proton translocation. Part of the complex F(0) domain. Minor subunit located with subunit a in the membrane. The sequence is that of ATP synthase protein 8 (MT-ATP8) from Patiria pectinifera (Starfish).